We begin with the raw amino-acid sequence, 411 residues long: Lysosome-associated membrane glycoprotein 2 (411 aa).

The signal sequence occupies residues 1-26; sequence MRLLSPVTGSKLVLLFLFLGAVRSDA. The tract at residues 27–188 is first lumenal domain; sequence LKLNLTDSKG…SKHEQVCKED (162 aa). The Lumenal portion of the chain corresponds to 27 to 376; sequence LKLNLTDSKG…QDCSADEDNF (350 aa). An intrachain disulfide couples Cys38 to Cys75. N-linked (GlcNAc...) asparagine glycosylation is found at Asn46, Asn57, Asn71, Asn97, Asn109, Asn117, Asn175, Asn223, Asn230, Asn243, Asn261, Asn276, Asn308, Asn318, and Asn357. Cys149 and Cys185 are joined by a disulfide. A hinge region spans residues 189-229; that stretch reads KTATTVAPIIHTTVPSPTTTLTPTSIPVPTPTVGNYTISNG. The interval 230–376 is second lumenal domain; the sequence is NATCLLATMG…QDCSADEDNF (147 aa). Cysteines 233 and 266 form a disulfide. Cys332 and Cys369 are disulfide-bonded. The chain crosses the membrane as a helical span at residues 377 to 400; sequence LVPIAVGAALGGVLILVLLAYFIG. Residues 401–411 are Cytoplasmic-facing; it reads LKRHHTGYEQF. The important for binding and subsequent lysosomal degradation of target proteins stretch occupies residues 402–405; the sequence is KRHH.

This sequence belongs to the LAMP family. In terms of assembly, monomer. Forms large homooligomers. Interacts (via its cytoplasmic region) with HSPA8; HSPA8 mediates recruitment of proteins with a KFERQ motif to the surface of the lysosome for chaperone-mediated autophagy. Interacts with HSP90 in the lysosome lumen; this enhances LAMP2 stability. Interacts with MLLT11. Interacts with ABCB9. Interacts with FURIN. Interacts with CT55; this interaction may be important for LAMP2 protein stability. Interacts with TMEM175; inhibiting the proton channel activity of TMEM175. Forms a ternary complex with RAB7A and RUFY4 (via RUN domain); the interaction with RAB7A is mediated by RUFY4 (via RUN and coiled coil domains). Extensively N-glycosylated. Contains a minor proportion of O-linked glycans. Contains sialylated glycans. Detected in liver, kidney, spleen and macrophages (at protein level).

Its subcellular location is the lysosome membrane. The protein localises to the endosome membrane. It is found in the cell membrane. It localises to the cytoplasmic vesicle. The protein resides in the autophagosome membrane. Functionally, lysosomal membrane glycoprotein which plays an important role in lysosome biogenesis, lysosomal pH regulation and autophagy. Acts as an important regulator of lysosomal lumen pH regulation by acting as a direct inhibitor of the proton channel TMEM175, facilitating lysosomal acidification for optimal hydrolase activity. Plays an important role in chaperone-mediated autophagy, a process that mediates lysosomal degradation of proteins in response to various stresses and as part of the normal turnover of proteins with a long biological half-live. Functions by binding target proteins, such as GAPDH, NLRP3 and MLLT11, and targeting them for lysosomal degradation. In the chaperone-mediated autophagy, acts downstream of chaperones, such as HSPA8/HSC70, which recognize and bind substrate proteins and mediate their recruitment to lysosomes, where target proteins bind LAMP2. Plays a role in lysosomal protein degradation in response to starvation. Required for the fusion of autophagosomes with lysosomes during autophagy. Cells that lack LAMP2 express normal levels of VAMP8, but fail to accumulate STX17 on autophagosomes, which is the most likely explanation for the lack of fusion between autophagosomes and lysosomes. Required for normal degradation of the contents of autophagosomes. Required for efficient MHC class II-mediated presentation of exogenous antigens via its function in lysosomal protein degradation; antigenic peptides generated by proteases in the endosomal/lysosomal compartment are captured by nascent MHC II subunits. Is not required for efficient MHC class II-mediated presentation of endogenous antigens. In Rattus norvegicus (Rat), this protein is Lysosome-associated membrane glycoprotein 2 (Lamp2).